Here is a 541-residue protein sequence, read N- to C-terminus: Carboxypeptidase Y homolog A (541 aa).

The first 17 residues, 1-17 (MKLLMTGLLASAAVAAA), serve as a signal peptide directing secretion. Positions 18–122 (QEQQVLQAEG…KLQSYDLRVK (105 aa)) are excised as a propeptide. Disulfide bonds link Cys177–Cys417, Cys311–Cys325, Cys335–Cys358, Cys342–Cys351, and Cys380–Cys387. Asn208 carries an N-linked (GlcNAc...) asparagine glycan. Residue Ser264 is part of the active site. Asp456 is a catalytic residue. The N-linked (GlcNAc...) asparagine glycan is linked to Asn507. Residue His518 is part of the active site.

This sequence belongs to the peptidase S10 family.

The protein localises to the vacuole. The catalysed reaction is Release of a C-terminal amino acid with broad specificity.. Its function is as follows. Vacuolar carboxypeptidase involved in degradation of small peptides. Digests preferentially peptides containing an aliphatic or hydrophobic residue in P1' position, as well as methionine, leucine or phenylalanine in P1 position of ester substrate. This Arthroderma otae (strain ATCC MYA-4605 / CBS 113480) (Microsporum canis) protein is Carboxypeptidase Y homolog A (CPYA).